The following is a 104-amino-acid chain: Large ribosomal subunit protein uL24 (104 aa).

It belongs to the universal ribosomal protein uL24 family. Part of the 50S ribosomal subunit.

In terms of biological role, one of two assembly initiator proteins, it binds directly to the 5'-end of the 23S rRNA, where it nucleates assembly of the 50S subunit. Functionally, one of the proteins that surrounds the polypeptide exit tunnel on the outside of the subunit. The polypeptide is Large ribosomal subunit protein uL24 (Azotobacter vinelandii (strain DJ / ATCC BAA-1303)).